A 272-amino-acid chain; its full sequence is Tryptophan synthase alpha chain (272 aa).

Active-site proton acceptor residues include glutamate 49 and glutamate 60.

Belongs to the TrpA family. Tetramer of two alpha and two beta chains.

It catalyses the reaction (1S,2R)-1-C-(indol-3-yl)glycerol 3-phosphate + L-serine = D-glyceraldehyde 3-phosphate + L-tryptophan + H2O. The protein operates within amino-acid biosynthesis; L-tryptophan biosynthesis; L-tryptophan from chorismate: step 5/5. Its function is as follows. The alpha subunit is responsible for the aldol cleavage of indoleglycerol phosphate to indole and glyceraldehyde 3-phosphate. The polypeptide is Tryptophan synthase alpha chain (Legionella pneumophila (strain Corby)).